A 310-amino-acid chain; its full sequence is Methionyl-tRNA formyltransferase (310 aa).

A (6S)-5,6,7,8-tetrahydrofolate-binding site is contributed by Ser111–Pro114.

This sequence belongs to the Fmt family.

It catalyses the reaction L-methionyl-tRNA(fMet) + (6R)-10-formyltetrahydrofolate = N-formyl-L-methionyl-tRNA(fMet) + (6S)-5,6,7,8-tetrahydrofolate + H(+). Attaches a formyl group to the free amino group of methionyl-tRNA(fMet). The formyl group appears to play a dual role in the initiator identity of N-formylmethionyl-tRNA by promoting its recognition by IF2 and preventing the misappropriation of this tRNA by the elongation apparatus. This Rhodopseudomonas palustris (strain ATCC BAA-98 / CGA009) protein is Methionyl-tRNA formyltransferase.